A 508-amino-acid polypeptide reads, in one-letter code: Putative POTE ankyrin domain family member M (508 aa).

ANK repeat units lie at residues Gln172–Ile201, Lys205–Ile234, Tyr238–Ser267, His271–Ala300, and Tyr304–Ser333. The interval Ser369 to Gly487 is disordered. Composition is skewed to basic and acidic residues over residues Gln377–Gly392 and Glu406–Lys421. Over residues Thr476–Gly487 the composition is skewed to polar residues.

Belongs to the POTE family.

The polypeptide is Putative POTE ankyrin domain family member M (POTEM) (Homo sapiens (Human)).